Consider the following 525-residue polypeptide: GMP synthase [glutamine-hydrolyzing] (525 aa).

The Glutamine amidotransferase type-1 domain occupies 9-207 (RILILDFGSQ…VMDICKCEKL (199 aa)). Cys86 functions as the Nucleophile in the catalytic mechanism. Active-site residues include His181 and Glu183. Residues 208 to 400 (WTAGAIIEDA…LGLPYDMLYR (193 aa)) enclose the GMPS ATP-PPase domain. An ATP-binding site is contributed by 235 to 241 (SGGVDSS).

Homodimer.

It carries out the reaction XMP + L-glutamine + ATP + H2O = GMP + L-glutamate + AMP + diphosphate + 2 H(+). Its pathway is purine metabolism; GMP biosynthesis; GMP from XMP (L-Gln route): step 1/1. Functionally, catalyzes the synthesis of GMP from XMP. This Alteromonas mediterranea (strain DSM 17117 / CIP 110805 / LMG 28347 / Deep ecotype) protein is GMP synthase [glutamine-hydrolyzing].